A 612-amino-acid chain; its full sequence is Elongation factor 4 (612 aa).

A tr-type G domain is found at 12–194; sequence SRIRNFSIIA…QIVEKVPAPT (183 aa). GTP contacts are provided by residues 24–29 and 141–144; these read DHGKST and NKID.

It belongs to the TRAFAC class translation factor GTPase superfamily. Classic translation factor GTPase family. LepA subfamily.

It is found in the cell membrane. It catalyses the reaction GTP + H2O = GDP + phosphate + H(+). Functionally, required for accurate and efficient protein synthesis under certain stress conditions. May act as a fidelity factor of the translation reaction, by catalyzing a one-codon backward translocation of tRNAs on improperly translocated ribosomes. Back-translocation proceeds from a post-translocation (POST) complex to a pre-translocation (PRE) complex, thus giving elongation factor G a second chance to translocate the tRNAs correctly. Binds to ribosomes in a GTP-dependent manner. The polypeptide is Elongation factor 4 (Bacillus subtilis (strain 168)).